We begin with the raw amino-acid sequence, 1226 residues long: DNA-directed RNA polymerase subunit beta (1226 aa).

This sequence belongs to the RNA polymerase beta chain family. The RNAP catalytic core consists of 2 alpha, 1 beta, 1 beta' and 1 omega subunit. When a sigma factor is associated with the core the holoenzyme is formed, which can initiate transcription.

It carries out the reaction RNA(n) + a ribonucleoside 5'-triphosphate = RNA(n+1) + diphosphate. Its function is as follows. DNA-dependent RNA polymerase catalyzes the transcription of DNA into RNA using the four ribonucleoside triphosphates as substrates. This chain is DNA-directed RNA polymerase subunit beta, found in Leptospira interrogans serogroup Icterohaemorrhagiae serovar Lai (strain 56601).